Reading from the N-terminus, the 206-residue chain is dITP/XTP pyrophosphatase (206 aa).

Ser7–Lys12 lines the substrate pocket. The active-site Proton acceptor is Asp72. Position 72 (Asp72) interacts with Mg(2+). Residues Ser73, Phe155–Asp158, Lys182, and His187–Arg188 contribute to the substrate site.

Belongs to the HAM1 NTPase family. Homodimer. Requires Mg(2+) as cofactor.

The enzyme catalyses XTP + H2O = XMP + diphosphate + H(+). The catalysed reaction is dITP + H2O = dIMP + diphosphate + H(+). It carries out the reaction ITP + H2O = IMP + diphosphate + H(+). Pyrophosphatase that catalyzes the hydrolysis of nucleoside triphosphates to their monophosphate derivatives, with a high preference for the non-canonical purine nucleotides XTP (xanthosine triphosphate), dITP (deoxyinosine triphosphate) and ITP. Seems to function as a house-cleaning enzyme that removes non-canonical purine nucleotides from the nucleotide pool, thus preventing their incorporation into DNA/RNA and avoiding chromosomal lesions. This chain is dITP/XTP pyrophosphatase, found in Corynebacterium glutamicum (strain ATCC 13032 / DSM 20300 / JCM 1318 / BCRC 11384 / CCUG 27702 / LMG 3730 / NBRC 12168 / NCIMB 10025 / NRRL B-2784 / 534).